Here is a 238-residue protein sequence, read N- to C-terminus: CD63 antigen (238 aa).

Topologically, residues 2–11 (AVEGGMKCVK) are cytoplasmic. Residues 12–32 (FLLYVLLLAFCACAVGLIAVG) traverse the membrane as a helical segment. Topologically, residues 33–51 (VGAQLVLSQTIIQGATPGS) are extracellular. A helical membrane pass occupies residues 52 to 72 (LLPVVIIAVGVFLFLVAFVGC). Over 73 to 81 (CGACKENYC) the chain is Cytoplasmic. A helical transmembrane segment spans residues 82-102 (LMITFAIFLSLIMLVEVAAAI). Topologically, residues 103-203 (AGYVFRDKVM…KIGGWLRKNV (101 aa)) are extracellular. Residues Asn130, Asn150, and Asn172 are each glycosylated (N-linked (GlcNAc...) asparagine). The helical transmembrane segment at 204 to 224 (LVVAAAALGIAFVEVLGIVFA) threads the bilayer. Topologically, residues 225 to 238 (CCLVKSIRSGYEVM) are cytoplasmic. The Lysosomal targeting motif motif lies at 234–238 (GYEVM).

The protein belongs to the tetraspanin (TM4SF) family. Interacts with TIMP1 and ITGB1 and recruits TIMP1 to ITGB1. Interacts with CD9. Identified in a complex with CD9 and ITGB3. Interacts with PMEL. Interacts with KDR/VEGFR2; identified in a complex with ITGB1 and KDR/VEGFR2 and is required to recruit KDR to ITGB1 complexes. Interacts with SYT7. Palmitoylated at a low, basal level in unstimulated platelets. The level of palmitoylation increases when platelets are activated by thrombin (in vitro). In terms of tissue distribution, detected in platelets (at protein level). Dysplastic nevi, radial growth phase primary melanomas, hematopoietic cells, tissue macrophages.

It is found in the cell membrane. It localises to the lysosome membrane. The protein localises to the late endosome membrane. Its subcellular location is the endosome. The protein resides in the multivesicular body. It is found in the melanosome. It localises to the secreted. The protein localises to the extracellular exosome. Its subcellular location is the cell surface. Functions as a cell surface receptor for TIMP1 and plays a role in the activation of cellular signaling cascades. Plays a role in the activation of ITGB1 and integrin signaling, leading to the activation of AKT, FAK/PTK2 and MAP kinases. Promotes cell survival, reorganization of the actin cytoskeleton, cell adhesion, spreading and migration, via its role in the activation of AKT and FAK/PTK2. Plays a role in VEGFA signaling via its role in regulating the internalization of KDR/VEGFR2. Plays a role in intracellular vesicular transport processes, and is required for normal trafficking of the PMEL luminal domain that is essential for the development and maturation of melanocytes. Plays a role in the adhesion of leukocytes onto endothelial cells via its role in the regulation of SELP trafficking. May play a role in mast cell degranulation in response to Ms4a2/FceRI stimulation, but not in mast cell degranulation in response to other stimuli. The protein is CD63 antigen (CD63) of Homo sapiens (Human).